A 491-amino-acid chain; its full sequence is UDP-N-acetylmuramate--L-alanine ligase (491 aa).

126-132 (GTHGKTT) lines the ATP pocket.

This sequence belongs to the MurCDEF family.

It is found in the cytoplasm. It catalyses the reaction UDP-N-acetyl-alpha-D-muramate + L-alanine + ATP = UDP-N-acetyl-alpha-D-muramoyl-L-alanine + ADP + phosphate + H(+). Its pathway is cell wall biogenesis; peptidoglycan biosynthesis. Its function is as follows. Cell wall formation. This is UDP-N-acetylmuramate--L-alanine ligase from Salmonella paratyphi C (strain RKS4594).